Reading from the N-terminus, the 669-residue chain is Epithelial sodium channel subunit alpha (669 aa).

The disordered stretch occupies residues 1-43 (MEGNKLEEQDSSPPQSTPGLMKGNKREEQGLGPEPAAPQQPTA). At 1-85 (MEGNKLEEQD…CSQHNRMKTA (85 aa)) the chain is on the cytoplasmic side. Positions 33 to 42 (PEPAAPQQPT) are enriched in low complexity. The helical transmembrane segment at 86–106 (FWAVLWLCTFGMMYWQFGLLF) threads the bilayer. The Extracellular portion of the chain corresponds to 107-562 (GEYFSYPVSL…SQWSLWFGSS (456 aa)). 10 disulfide bridges follow: Cys-133-Cys-305, Cys-229-Cys-236, Cys-282-Cys-289, Cys-394-Cys-479, Cys-416-Cys-456, Cys-416-Cys-475, Cys-420-Cys-471, Cys-429-Cys-456, Cys-429-Cys-479, and Cys-431-Cys-445. The interval 175–243 (RSRRDLRGTL…SDCFYQTYSS (69 aa)) is gating release of inhibition by proteolysis (GRIP); protease-sensitive region that is responsible for the proteolytic activation of the channel. A helical membrane pass occupies residues 563-583 (VLSVVEMAELVFDLLVIMFLM). Topologically, residues 584 to 669 (LLRRFRSRYW…SSSTCPLGGP (86 aa)) are cytoplasmic. The segment at 620 to 669 (HPMSLSLSQPGPAPSPALTAPPPAYATLGPRPSPGGSAGASSSTCPLGGP) is disordered. The segment covering 630–643 (GPAPSPALTAPPPA) has biased composition (pro residues). A PY motif; recruits WW domain-containing proteins and is thereby required for ubiquitination and inhibition of the channel by NEDD4 and NEDD4L motif is present at residues 640-644 (PPPAY).

This sequence belongs to the amiloride-sensitive sodium channel (TC 1.A.6) family. SCNN1A subfamily. In terms of assembly, heterotrimer; containing an alpha/SCNN1A, a beta/SCNN1B and a gamma/SCNN1G subunit. Interacts with WWP1 (via WW domains). Interacts with WWP2 (via WW domains); inhibits the channel. Interacts with BPIFA1; the interaction is indirect via SCNN1B and inhibits the proteolytic processing of SCNN1A and SCNN1G and the activation of ENaC. Interacts with the full-length immature form of PCSK9 (pro-PCSK9); inhibits ENaC by promoting its proteasomal degradation. Ubiquitinated. Can be ubiquitinated at multiple sites and undergo monoubiquitination and polyubiquitination. Ubiquitination by NEDD4 or NEDD4L inhibits the ENaC channel through endocytosis, intracellular retention and degradation of its individual subunits. In terms of processing, ENaC is activated through the proteolytic maturation of its subunits. Furin cleaves the SCNN1A subunit, which results in a stepwise increase in the open probability of the channel due to the release of an inhibitory tract. BPIFA1, which is recruited by the SCNN1B subunit, prevents the proteolytic activation of ENaC. Post-translationally, N-glycosylated. Expressed in the female reproductive tract, from the fimbrial end of the fallopian tube to the endometrium (at protein level). Expressed in kidney (at protein level). In the respiratory tract, expressed in the bronchial epithelium (at protein level). Highly expressed in lung. Detected at intermediate levels in pancreas and liver, and at low levels in heart and placenta. in skin, expressed in keratinocytes, melanocytes and Merkel cells of the epidermal sub-layers, stratum basale, stratum spinosum and stratum granulosum (at protein level). Expressed in the outer root sheath of the hair follicles (at protein level). Detected in both peripheral and central cells of the sebaceous gland (at protein level). Expressed by eccrine sweat glands (at protein level). In skin, also expressed by arrector pili muscle cells and intradermal adipocytes. Isoform 1 and isoform 2 predominate in all tissues. As to expression, detected in lung and heart.

It localises to the apical cell membrane. The protein localises to the cell projection. The protein resides in the cilium. It is found in the cytoplasmic granule. Its subcellular location is the cytoplasm. It localises to the cytoplasmic vesicle. The protein localises to the secretory vesicle. The protein resides in the acrosome. It is found in the flagellum. It carries out the reaction Na(+)(in) = Na(+)(out). With respect to regulation, originally identified and characterized by its inhibition by the diuretic drug amiloride. Inhibited by phenamil. In terms of biological role, this is one of the three pore-forming subunits of the heterotrimeric epithelial sodium channel (ENaC), a critical regulator of sodium balance and fluid homeostasis. ENaC operates in epithelial tissues, where it mediates the electrodiffusion of sodium ions from extracellular fluid through the apical membrane of cells, with water following osmotically. It plays a key role in maintaining sodium homeostasis through electrogenic sodium reabsorption in the kidneys. Additionally, ENaC is essential for airway surface liquid homeostasis, which is crucial for proper mucus clearance. Its function is as follows. Not functional. The chain is Epithelial sodium channel subunit alpha from Homo sapiens (Human).